A 216-amino-acid polypeptide reads, in one-letter code: Probable chemoreceptor glutamine deamidase CheD (216 aa).

This sequence belongs to the CheD family.

It catalyses the reaction L-glutaminyl-[protein] + H2O = L-glutamyl-[protein] + NH4(+). Its function is as follows. Probably deamidates glutamine residues to glutamate on methyl-accepting chemotaxis receptors (MCPs), playing an important role in chemotaxis. The chain is Probable chemoreceptor glutamine deamidase CheD from Halorhodospira halophila (strain DSM 244 / SL1) (Ectothiorhodospira halophila (strain DSM 244 / SL1)).